The chain runs to 105 residues: Co-chaperonin GroES (105 aa).

The protein belongs to the GroES chaperonin family. Heptamer of 7 subunits arranged in a ring. Interacts with the chaperonin GroEL.

The protein resides in the cytoplasm. Its function is as follows. Together with the chaperonin GroEL, plays an essential role in assisting protein folding. The GroEL-GroES system forms a nano-cage that allows encapsulation of the non-native substrate proteins and provides a physical environment optimized to promote and accelerate protein folding. GroES binds to the apical surface of the GroEL ring, thereby capping the opening of the GroEL channel. The polypeptide is Co-chaperonin GroES (Methylovorus sp. (strain SS1 / DSM 11726)).